Reading from the N-terminus, the 179-residue chain is MAKLHDYYKDEVIKQLMSQFDYNSVMQVPRVEKITLNMGVGEAIADKKLLDNAAADLAAISGQKPLITKARKSVAGFKIRQGYPIGCKVTLRGERMWEFFERLISIAVPRIRDFRGLSAKSFDGRGNYSMGVREQIIFPEIDYDKVDRVRGLDITITTTAKSDDEGRALLAAFNFPFRK.

It belongs to the universal ribosomal protein uL5 family. As to quaternary structure, part of the 50S ribosomal subunit; part of the 5S rRNA/L5/L18/L25 subcomplex. Contacts the 5S rRNA and the P site tRNA. Forms a bridge to the 30S subunit in the 70S ribosome.

This is one of the proteins that bind and probably mediate the attachment of the 5S RNA into the large ribosomal subunit, where it forms part of the central protuberance. In the 70S ribosome it contacts protein S13 of the 30S subunit (bridge B1b), connecting the 2 subunits; this bridge is implicated in subunit movement. Contacts the P site tRNA; the 5S rRNA and some of its associated proteins might help stabilize positioning of ribosome-bound tRNAs. In Buchnera aphidicola subsp. Acyrthosiphon kondoi (Acyrthosiphon kondoi symbiotic bacterium), this protein is Large ribosomal subunit protein uL5.